The following is a 311-amino-acid chain: Solute carrier family 25 member 36-A (311 aa).

Solcar repeat units lie at residues Arg4–Lys108, Asp116–Lys203, and Ser224–Leu308. A run of 6 helical transmembrane segments spans residues Leu7 to Leu27, Phe41 to Ala57, Asn111 to Thr131, Met180 to Ile200, Phe226 to Pro246, and Gln291 to Gly311.

Belongs to the mitochondrial carrier (TC 2.A.29) family.

Its subcellular location is the mitochondrion inner membrane. This is Solute carrier family 25 member 36-A (slc25a36a) from Danio rerio (Zebrafish).